Reading from the N-terminus, the 231-residue chain is Large ribosomal subunit protein uL1 (231 aa).

Belongs to the universal ribosomal protein uL1 family. In terms of assembly, part of the 50S ribosomal subunit.

Functionally, binds directly to 23S rRNA. The L1 stalk is quite mobile in the ribosome, and is involved in E site tRNA release. In terms of biological role, protein L1 is also a translational repressor protein, it controls the translation of the L11 operon by binding to its mRNA. The chain is Large ribosomal subunit protein uL1 from Pseudomonas entomophila (strain L48).